We begin with the raw amino-acid sequence, 237 residues long: Sugar fermentation stimulation protein homolog (237 aa).

This sequence belongs to the SfsA family.

This is Sugar fermentation stimulation protein homolog from Synechocystis sp. (strain ATCC 27184 / PCC 6803 / Kazusa).